The primary structure comprises 204 residues: Ribosome maturation factor RimM (204 aa).

Residues 117–192 (DEDEFFSADL…EVTIDPPDDL (76 aa)) enclose the PRC barrel domain.

It belongs to the RimM family. In terms of assembly, binds ribosomal protein uS19.

It localises to the cytoplasm. Its function is as follows. An accessory protein needed during the final step in the assembly of 30S ribosomal subunit, possibly for assembly of the head region. Essential for efficient processing of 16S rRNA. May be needed both before and after RbfA during the maturation of 16S rRNA. It has affinity for free ribosomal 30S subunits but not for 70S ribosomes. The polypeptide is Ribosome maturation factor RimM (Methylobacterium nodulans (strain LMG 21967 / CNCM I-2342 / ORS 2060)).